Consider the following 147-residue polypeptide: MPTYTPKAGDVTRTWYVIDATDVVLGRLAVQAANLLRGKHKPTFAPHVDGGDFVIIINAEKIALSGNKLTNKFAYRHSGFPGGLSKRSIGEQLEKFPTRTVEKAIVGMLPKNKLGRQIERKLKVYAGAEHPHAAQQPIPFEIKQVAQ.

The protein belongs to the universal ribosomal protein uL13 family. Part of the 50S ribosomal subunit.

In terms of biological role, this protein is one of the early assembly proteins of the 50S ribosomal subunit, although it is not seen to bind rRNA by itself. It is important during the early stages of 50S assembly. In Mycobacteroides abscessus (strain ATCC 19977 / DSM 44196 / CCUG 20993 / CIP 104536 / JCM 13569 / NCTC 13031 / TMC 1543 / L948) (Mycobacterium abscessus), this protein is Large ribosomal subunit protein uL13.